The chain runs to 119 residues: Large ribosomal subunit protein bL20 (119 aa).

This sequence belongs to the bacterial ribosomal protein bL20 family.

Functionally, binds directly to 23S ribosomal RNA and is necessary for the in vitro assembly process of the 50S ribosomal subunit. It is not involved in the protein synthesizing functions of that subunit. This Nitrobacter winogradskyi (strain ATCC 25391 / DSM 10237 / CIP 104748 / NCIMB 11846 / Nb-255) protein is Large ribosomal subunit protein bL20.